The following is a 444-amino-acid chain: Tryptophan 5-hydroxylase 1 (444 aa).

The region spanning 19 to 94 is the ACT domain; that stretch reads TLIFSLKNEV…TVLSVDSPDQ (76 aa). S58 carries the post-translational modification Phosphoserine; by PKA. L-tryptophan contacts are provided by Y235, R257, and T265. Residues H272, H277, and E317 each coordinate Fe cation. 2 residues coordinate L-tryptophan: S336 and I366.

The protein belongs to the biopterin-dependent aromatic amino acid hydroxylase family. As to quaternary structure, homotetramer. Interacts with DNAJC12. Requires Fe(2+) as cofactor. Post-translationally, ubiquitinated, leading to its degradation by the proteasome. Ubiquitinated is triggered by phosphorylation. In terms of processing, phosphorylated; triggering degradation by the proteasome.

The enzyme catalyses (6R)-L-erythro-5,6,7,8-tetrahydrobiopterin + L-tryptophan + O2 = 5-hydroxy-L-tryptophan + (4aS,6R)-4a-hydroxy-L-erythro-5,6,7,8-tetrahydrobiopterin. It functions in the pathway aromatic compound metabolism; serotonin biosynthesis; serotonin from L-tryptophan: step 1/2. Oxidizes L-tryptophan to 5-hydroxy-l-tryptophan in the rate-determining step of serotonin biosynthesis. This chain is Tryptophan 5-hydroxylase 1 (Tph1), found in Rattus norvegicus (Rat).